A 343-amino-acid polypeptide reads, in one-letter code: N-acetyl-gamma-glutamyl-phosphate reductase (343 aa).

The active site involves C148.

It belongs to the NAGSA dehydrogenase family. Type 1 subfamily.

It is found in the cytoplasm. The enzyme catalyses N-acetyl-L-glutamate 5-semialdehyde + phosphate + NADP(+) = N-acetyl-L-glutamyl 5-phosphate + NADPH + H(+). The protein operates within amino-acid biosynthesis; L-arginine biosynthesis; N(2)-acetyl-L-ornithine from L-glutamate: step 3/4. Functionally, catalyzes the NADPH-dependent reduction of N-acetyl-5-glutamyl phosphate to yield N-acetyl-L-glutamate 5-semialdehyde. The chain is N-acetyl-gamma-glutamyl-phosphate reductase from Caldicellulosiruptor saccharolyticus (strain ATCC 43494 / DSM 8903 / Tp8T 6331).